We begin with the raw amino-acid sequence, 126 residues long: Nucleoside diphosphate kinase B (126 aa).

Lys-6, Phe-37, Thr-68, Arg-79, and Asn-89 together coordinate ATP. Catalysis depends on His-92, which acts as the Pros-phosphohistidine intermediate.

Belongs to the NDK family. Mg(2+) is required as a cofactor.

It localises to the cytoplasm. The protein localises to the nucleus. It is found in the cell projection. The protein resides in the lamellipodium. Its subcellular location is the ruffle. It carries out the reaction a 2'-deoxyribonucleoside 5'-diphosphate + ATP = a 2'-deoxyribonucleoside 5'-triphosphate + ADP. It catalyses the reaction a ribonucleoside 5'-diphosphate + ATP = a ribonucleoside 5'-triphosphate + ADP. In terms of biological role, major role in the synthesis of nucleoside triphosphates other than ATP. The polypeptide is Nucleoside diphosphate kinase B (nme2) (Merluccius capensis (Shallow-water Cape hake)).